A 476-amino-acid chain; its full sequence is CDK5 and ABL1 enzyme substrate 2 (476 aa).

The tract at residues 1 to 119 (MAAAAAGGAP…GLGLDGQRQR (119 aa)) is disordered. Over residues 30-40 (PRRRGDSRRRQ) the composition is skewed to basic residues. Residues 65–96 (PAPPPPPPTEAREAPAPPPAPPGGLPGLPARP) are compositionally biased toward pro residues. Residues serine 128 and serine 206 each carry the phosphoserine modification. The segment at 256 to 295 (DSHGLLPQPRPSIPRAPPGSRHKPVPTKSTPAGTELGSDG) is disordered. The segment covering 263–272 (QPRPSIPRAP) has biased composition (pro residues).

This sequence belongs to the cyclin family. In terms of assembly, binds to CDK3, CDK5 and ABL1. The C-terminal cyclin-box-like region binds to CDK5. In terms of tissue distribution, widely expressed.

Unknown. Probably involved in G1-S cell cycle transition. This Mus musculus (Mouse) protein is CDK5 and ABL1 enzyme substrate 2 (Cables2).